A 689-amino-acid polypeptide reads, in one-letter code: Glycine--tRNA ligase beta subunit (689 aa).

The protein belongs to the class-II aminoacyl-tRNA synthetase family. As to quaternary structure, tetramer of two alpha and two beta subunits.

It localises to the cytoplasm. The enzyme catalyses tRNA(Gly) + glycine + ATP = glycyl-tRNA(Gly) + AMP + diphosphate. This chain is Glycine--tRNA ligase beta subunit, found in Pectobacterium atrosepticum (strain SCRI 1043 / ATCC BAA-672) (Erwinia carotovora subsp. atroseptica).